Here is a 248-residue protein sequence, read N- to C-terminus: Ubiquinone/menaquinone biosynthesis C-methyltransferase UbiE (248 aa).

S-adenosyl-L-methionine is bound by residues Ser68 and Asp92.

It belongs to the class I-like SAM-binding methyltransferase superfamily. MenG/UbiE family.

The catalysed reaction is a 2-demethylmenaquinol + S-adenosyl-L-methionine = a menaquinol + S-adenosyl-L-homocysteine + H(+). It catalyses the reaction a 2-methoxy-6-(all-trans-polyprenyl)benzene-1,4-diol + S-adenosyl-L-methionine = a 5-methoxy-2-methyl-3-(all-trans-polyprenyl)benzene-1,4-diol + S-adenosyl-L-homocysteine + H(+). The protein operates within quinol/quinone metabolism; menaquinone biosynthesis; menaquinol from 1,4-dihydroxy-2-naphthoate: step 2/2. Its pathway is cofactor biosynthesis; ubiquinone biosynthesis. Its function is as follows. Methyltransferase required for the conversion of demethylmenaquinol (DMKH2) to menaquinol (MKH2) and the conversion of 2-polyprenyl-6-methoxy-1,4-benzoquinol (DDMQH2) to 2-polyprenyl-3-methyl-6-methoxy-1,4-benzoquinol (DMQH2). This is Ubiquinone/menaquinone biosynthesis C-methyltransferase UbiE from Rickettsia bellii (strain OSU 85-389).